A 245-amino-acid polypeptide reads, in one-letter code: Ribosome maturation factor RimP (245 aa).

This sequence belongs to the RimP family.

It localises to the cytoplasm. Required for maturation of 30S ribosomal subunits. The polypeptide is Ribosome maturation factor RimP (Verminephrobacter eiseniae (strain EF01-2)).